A 294-amino-acid polypeptide reads, in one-letter code: Metallophosphoesterase MPPED2 (294 aa).

Residues D65, H67, D86, N117, and H213 each contribute to the Mn(2+) site. Residue 117 to 118 (NH) participates in GMP binding. Residues 225–226 (KE) and 254–255 (HE) contribute to the GMP site. H254 contacts Mn(2+).

It belongs to the UPF0046 family. In terms of assembly, homodimer. Requires Mn(2+) as cofactor. The cofactor is Co(2+). In terms of tissue distribution, expressed in fetal brain (at protein level). detected in fetal and adult brain.

Inhibited by nmolar levels of AMP and GMP. In terms of biological role, displays low metallophosphoesterase activity (in vitro). May play a role in the development of the nervous system. The protein is Metallophosphoesterase MPPED2 (Mpped2) of Rattus norvegicus (Rat).